The primary structure comprises 625 residues: 1-deoxy-D-xylulose-5-phosphate synthase (625 aa).

Residues His84 and 125 to 127 each bind thiamine diphosphate; that span reads GHS. A Mg(2+)-binding site is contributed by Asp156. Thiamine diphosphate-binding positions include 157 to 158, Asn185, Phe292, and Glu373; that span reads GA. Asn185 contacts Mg(2+).

Belongs to the transketolase family. DXPS subfamily. As to quaternary structure, homodimer. Requires Mg(2+) as cofactor. Thiamine diphosphate serves as cofactor.

It catalyses the reaction D-glyceraldehyde 3-phosphate + pyruvate + H(+) = 1-deoxy-D-xylulose 5-phosphate + CO2. It participates in metabolic intermediate biosynthesis; 1-deoxy-D-xylulose 5-phosphate biosynthesis; 1-deoxy-D-xylulose 5-phosphate from D-glyceraldehyde 3-phosphate and pyruvate: step 1/1. Catalyzes the acyloin condensation reaction between C atoms 2 and 3 of pyruvate and glyceraldehyde 3-phosphate to yield 1-deoxy-D-xylulose-5-phosphate (DXP). The protein is 1-deoxy-D-xylulose-5-phosphate synthase of Marinomonas sp. (strain MWYL1).